Here is a 319-residue protein sequence, read N- to C-terminus: Acetyl esterase (319 aa).

Residues 91–93 (HGG) carry the Involved in the stabilization of the negatively charged intermediate by the formation of the oxyanion hole motif. Active-site residues include S165, D262, and H292.

This sequence belongs to the 'GDXG' lipolytic enzyme family. In terms of assembly, homodimer. Interacts with MalT and MelA.

Its subcellular location is the cytoplasm. Its function is as follows. Displays esterase activity towards short chain fatty esters (acyl chain length of up to 8 carbons). Able to hydrolyze triacetylglycerol (triacetin) and tributyrylglycerol (tributyrin), but not trioleylglycerol (triolein) or cholesterol oleate. Negatively regulates MalT activity by antagonizing maltotriose binding. Inhibits MelA galactosidase activity. This chain is Acetyl esterase, found in Escherichia coli (strain ATCC 8739 / DSM 1576 / NBRC 3972 / NCIMB 8545 / WDCM 00012 / Crooks).